Reading from the N-terminus, the 307-residue chain is Glycine--tRNA ligase alpha subunit (307 aa).

The protein belongs to the class-II aminoacyl-tRNA synthetase family. Tetramer of two alpha and two beta subunits.

It is found in the cytoplasm. The enzyme catalyses tRNA(Gly) + glycine + ATP = glycyl-tRNA(Gly) + AMP + diphosphate. This is Glycine--tRNA ligase alpha subunit from Xylella fastidiosa (strain M23).